Consider the following 148-residue polypeptide: Small ribosomal subunit protein uS15 (148 aa).

This sequence belongs to the universal ribosomal protein uS15 family.

This chain is Small ribosomal subunit protein uS15 (RPS13), found in Encephalitozoon cuniculi (strain GB-M1) (Microsporidian parasite).